The chain runs to 271 residues: Zinc finger CCHC domain-containing protein 9 (271 aa).

Positions 1–40 (MTRWARVSTTYNKRPLPATSWEDMKKGSFEGTSQNLPKRK) are disordered. S48 carries the phosphoserine modification. 4 consecutive CCHC-type zinc fingers follow at residues 128–145 (MVCF…DCPA), 155–172 (GICY…KCKA), 184–201 (AKCF…SCPD), and 211–228 (GGCK…DCPE).

The protein localises to the nucleus. The protein resides in the nucleolus. Its function is as follows. May down-regulate transcription mediated by NF-kappa-B and the serum response element. In Homo sapiens (Human), this protein is Zinc finger CCHC domain-containing protein 9 (ZCCHC9).